The following is a 361-amino-acid chain: 3-dehydroquinate synthase (361 aa).

Residues 71-76, 105-109, 129-130, Lys-142, Lys-151, and 169-172 each bind NAD(+); these read DGEQNK, GVIGD, TT, and CLNT. Positions 184, 247, and 264 each coordinate Zn(2+).

This sequence belongs to the sugar phosphate cyclases superfamily. Dehydroquinate synthase family. The cofactor is Co(2+). Zn(2+) is required as a cofactor. It depends on NAD(+) as a cofactor.

It localises to the cytoplasm. The catalysed reaction is 7-phospho-2-dehydro-3-deoxy-D-arabino-heptonate = 3-dehydroquinate + phosphate. The protein operates within metabolic intermediate biosynthesis; chorismate biosynthesis; chorismate from D-erythrose 4-phosphate and phosphoenolpyruvate: step 2/7. Catalyzes the conversion of 3-deoxy-D-arabino-heptulosonate 7-phosphate (DAHP) to dehydroquinate (DHQ). The chain is 3-dehydroquinate synthase from Sodalis glossinidius (strain morsitans).